The sequence spans 433 residues: Signal recognition particle 54 kDa protein (433 aa).

Residues 106–113 (GVEGSGKT), 186–190 (DTAGR), and 244–247 (TKMD) contribute to the GTP site.

It belongs to the GTP-binding SRP family. SRP54 subfamily. As to quaternary structure, part of the signal recognition particle protein translocation system, which is composed of SRP and FtsY. Archaeal SRP consists of a 7S RNA molecule of 300 nucleotides and two protein subunits: SRP54 and SRP19.

The protein resides in the cytoplasm. The catalysed reaction is GTP + H2O = GDP + phosphate + H(+). Its function is as follows. Involved in targeting and insertion of nascent membrane proteins into the cytoplasmic membrane. Binds to the hydrophobic signal sequence of the ribosome-nascent chain (RNC) as it emerges from the ribosomes. The SRP-RNC complex is then targeted to the cytoplasmic membrane where it interacts with the SRP receptor FtsY. This is Signal recognition particle 54 kDa protein from Pyrobaculum aerophilum (strain ATCC 51768 / DSM 7523 / JCM 9630 / CIP 104966 / NBRC 100827 / IM2).